The primary structure comprises 201 residues: UPF0301 protein RHA1_ro03630 (201 aa).

Belongs to the UPF0301 (AlgH) family.

The protein is UPF0301 protein RHA1_ro03630 of Rhodococcus jostii (strain RHA1).